The chain runs to 122 residues: Selenoprotein H (122 aa).

Position 20 is an N6-acetyllysine (Lys-20). A cross-link (cysteinyl-selenocysteine (Cys-Sec); redox-active) is located at residues 41 to 44 (CTSU). Position 44 (Sec-44) is a non-standard amino acid, selenocysteine.

The protein belongs to the SelWTH family.

May be involved in a redox-related process. In Homo sapiens (Human), this protein is Selenoprotein H.